The sequence spans 678 residues: Glycine--tRNA ligase beta subunit (678 aa).

Belongs to the class-II aminoacyl-tRNA synthetase family. Tetramer of two alpha and two beta subunits.

It is found in the cytoplasm. It carries out the reaction tRNA(Gly) + glycine + ATP = glycyl-tRNA(Gly) + AMP + diphosphate. This is Glycine--tRNA ligase beta subunit from Streptococcus pneumoniae serotype 19F (strain G54).